Reading from the N-terminus, the 195-residue chain is MDQGMADELARLAPLLSGRIGRTIVLVGLMGAGKSCVGRRLAARLGLDFVDSDAEFEAASGSSISDYFARFGEAAFREGERKVIARLLDGPPVVLATGGGAFVDPTTRERIKAAGTSVWIRADLELLLKRTVGRDHRPLLKQGDPREILGRLMEARYPIYAEADIIVESTDEVPEATVIRVMEGLITYLDLEKTV.

31 to 36 (GAGKSC) lines the ATP pocket. Position 35 (Ser35) interacts with Mg(2+). Substrate contacts are provided by Asp53, Arg77, and Gly99. Arg137 serves as a coordination point for ATP. Arg156 lines the substrate pocket.

The protein belongs to the shikimate kinase family. Monomer. Requires Mg(2+) as cofactor.

Its subcellular location is the cytoplasm. The enzyme catalyses shikimate + ATP = 3-phosphoshikimate + ADP + H(+). The protein operates within metabolic intermediate biosynthesis; chorismate biosynthesis; chorismate from D-erythrose 4-phosphate and phosphoenolpyruvate: step 5/7. Functionally, catalyzes the specific phosphorylation of the 3-hydroxyl group of shikimic acid using ATP as a cosubstrate. The polypeptide is Shikimate kinase (Paramagnetospirillum magneticum (strain ATCC 700264 / AMB-1) (Magnetospirillum magneticum)).